Consider the following 116-residue polypeptide: Large ribosomal subunit protein bL17 (116 aa).

This sequence belongs to the bacterial ribosomal protein bL17 family. As to quaternary structure, part of the 50S ribosomal subunit. Contacts protein L32.

The sequence is that of Large ribosomal subunit protein bL17 from Helicobacter pylori (strain G27).